The following is a 115-amino-acid chain: Large ribosomal subunit protein uL18 (115 aa).

Belongs to the universal ribosomal protein uL18 family. In terms of assembly, part of the 50S ribosomal subunit; part of the 5S rRNA/L5/L18/L25 subcomplex. Contacts the 5S and 23S rRNAs.

This is one of the proteins that bind and probably mediate the attachment of the 5S RNA into the large ribosomal subunit, where it forms part of the central protuberance. This Ruthia magnifica subsp. Calyptogena magnifica protein is Large ribosomal subunit protein uL18.